The sequence spans 419 residues: 4-hydroxyphenylpyruvate dioxygenase (419 aa).

VOC domains follow at residues 41–187 and 218–376; these read GYHH…FIQR and AIDH…LFTK. Residues His-221, His-304, and Glu-387 each contribute to the Fe cation site.

It belongs to the 4HPPD family. Fe cation is required as a cofactor.

The catalysed reaction is 3-(4-hydroxyphenyl)pyruvate + O2 = homogentisate + CO2. It participates in amino-acid degradation; L-phenylalanine degradation; acetoacetate and fumarate from L-phenylalanine: step 3/6. This chain is 4-hydroxyphenylpyruvate dioxygenase (HPPD), found in Zymoseptoria tritici (Speckled leaf blotch fungus).